The chain runs to 229 residues: Probable GTP-binding protein EngB (229 aa).

An EngB-type G domain is found at 53–228 (DLPEVAFAGR…RAEIVRLCID (176 aa)). GTP contacts are provided by residues 61–68 (GRSNVGKS), 88–92 (GRTRE), 106–109 (DLPG), 173–176 (TKAD), and 207–209 (TSS). Positions 68 and 90 each coordinate Mg(2+).

Belongs to the TRAFAC class TrmE-Era-EngA-EngB-Septin-like GTPase superfamily. EngB GTPase family. Requires Mg(2+) as cofactor.

Functionally, necessary for normal cell division and for the maintenance of normal septation. The polypeptide is Probable GTP-binding protein EngB (Caulobacter vibrioides (strain NA1000 / CB15N) (Caulobacter crescentus)).